Here is a 365-residue protein sequence, read N- to C-terminus: Class E basic helix-loop-helix protein 22 (365 aa).

3 disordered regions span residues 34–93 (AFRS…GGGG), 134–156 (GRGS…DGRC), and 188–225 (HLHG…KEQK). The span at 82-93 (GGGGAGGGGGGG) shows a compositional bias: gly residues. Gly residues predominate over residues 191–216 (GGAGLPPGGSTGSGGGGSGGGGGGGS). Positions 226–280 (ALRLNINARERRRMHDLNDALDELRAVIPYAHSPSVRKLSKIATLLLAKNYILMQ) constitute a bHLH domain.

Heterodimer with other bHLH proteins, like TCF3/E47. Kidney, lung, brain and pancreas (insulinoma).

Its subcellular location is the nucleus. Its function is as follows. Inhibits DNA binding of TCF3/E47 homodimers and TCF3 (E47)/NEUROD1 heterodimers and acts as a strong repressor of Neurod1 and Myod-responsive genes, probably by heterodimerization with class a basic helix-loop-helix factors. Despite the presence of an intact basic domain, does not bind to DNA. The sequence is that of Class E basic helix-loop-helix protein 22 (BHLHE22) from Mesocricetus auratus (Golden hamster).